Reading from the N-terminus, the 390-residue chain is Leu/Ile/Val-binding protein homolog 6 (390 aa).

An N-terminal signal peptide occupies residues 1–21; the sequence is MKKIALTALAVFSLAASAAYA.

Belongs to the leucine-binding protein family.

Functionally, component of an amino-acid transport system. This Brucella suis biovar 1 (strain 1330) protein is Leu/Ile/Val-binding protein homolog 6.